We begin with the raw amino-acid sequence, 233 residues long: Small ribosomal subunit protein uS3 (233 aa).

Residues 28-96 (EFADNLDSDF…LRKVVADIAG (69 aa)) enclose the KH type-2 domain.

It belongs to the universal ribosomal protein uS3 family. In terms of assembly, part of the 30S ribosomal subunit. Forms a tight complex with proteins S10 and S14.

Binds the lower part of the 30S subunit head. Binds mRNA in the 70S ribosome, positioning it for translation. The sequence is that of Small ribosomal subunit protein uS3 from Shigella flexneri.